The primary structure comprises 255 residues: Phosphatidylglycerol--prolipoprotein diacylglyceryl transferase (255 aa).

3 helical membrane-spanning segments follow: residues 15–35 (WYGI…NLNC), 46–66 (IDVF…YYVV), and 84–104 (LGGL…YIVS). R130 lines the a 1,2-diacyl-sn-glycero-3-phospho-(1'-sn-glycerol) pocket. Transmembrane regions (helical) follow at residues 169-189 (PTFL…VYIF), 196-216 (GTVI…IEGL), and 228-248 (VAQL…VYLK).

The protein belongs to the Lgt family.

The protein resides in the cell membrane. The catalysed reaction is L-cysteinyl-[prolipoprotein] + a 1,2-diacyl-sn-glycero-3-phospho-(1'-sn-glycerol) = an S-1,2-diacyl-sn-glyceryl-L-cysteinyl-[prolipoprotein] + sn-glycerol 1-phosphate + H(+). Its pathway is protein modification; lipoprotein biosynthesis (diacylglyceryl transfer). Catalyzes the transfer of the diacylglyceryl group from phosphatidylglycerol to the sulfhydryl group of the N-terminal cysteine of a prolipoprotein, the first step in the formation of mature lipoproteins. In Clostridium kluyveri (strain NBRC 12016), this protein is Phosphatidylglycerol--prolipoprotein diacylglyceryl transferase.